The primary structure comprises 73 residues: Metallothionein-like protein type 2 (73 aa).

This sequence belongs to the metallothionein superfamily. Type 15 family.

Metallothioneins have a high content of cysteine residues that bind various heavy metals. This Solanum lycopersicum (Tomato) protein is Metallothionein-like protein type 2.